The chain runs to 505 residues: Beta-glucosidase 3 (505 aa).

Positions 1–22 are cleaved as a signal peptide; sequence MAAAAAFFCALLFISVQHGVLG. Residues Q43 and H143 each contribute to the a beta-D-glucoside site. The active-site Proton donor is the E189. C208 and C217 are joined by a disulfide. N221 carries N-linked (GlcNAc...) asparagine glycosylation. A beta-D-glucoside-binding residues include Y333 and E405. Residue E405 is the Nucleophile of the active site. N-linked (GlcNAc...) asparagine glycosylation is found at N415 and N436. Positions 450 and 466 each coordinate a beta-D-glucoside.

The protein belongs to the glycosyl hydrolase 1 family.

The catalysed reaction is Hydrolysis of terminal, non-reducing beta-D-glucosyl residues with release of beta-D-glucose.. The protein is Beta-glucosidase 3 (BGLU3) of Oryza sativa subsp. japonica (Rice).